The sequence spans 374 residues: Chaperone protein DnaJ (374 aa).

The J domain maps to 5–69; that stretch reads NYYQILGVSK…QKRAAYDRLG (65 aa). The segment at 137–215 adopts a CR-type zinc-finger fold; sequence GIEKNISFSS…CHGMGRYHKQ (79 aa). Cysteine 150, cysteine 153, cysteine 167, cysteine 170, cysteine 189, cysteine 192, cysteine 203, and cysteine 206 together coordinate Zn(2+). 4 CXXCXGXG motif repeats span residues 150 to 157, 167 to 174, 189 to 196, and 203 to 210; these read CDTCHGSG, CDACSGVG, CHKCQGNG, and CKKCHGMG.

This sequence belongs to the DnaJ family. As to quaternary structure, homodimer. It depends on Zn(2+) as a cofactor.

It localises to the cytoplasm. Its function is as follows. Participates actively in the response to hyperosmotic and heat shock by preventing the aggregation of stress-denatured proteins and by disaggregating proteins, also in an autonomous, DnaK-independent fashion. Unfolded proteins bind initially to DnaJ; upon interaction with the DnaJ-bound protein, DnaK hydrolyzes its bound ATP, resulting in the formation of a stable complex. GrpE releases ADP from DnaK; ATP binding to DnaK triggers the release of the substrate protein, thus completing the reaction cycle. Several rounds of ATP-dependent interactions between DnaJ, DnaK and GrpE are required for fully efficient folding. Also involved, together with DnaK and GrpE, in the DNA replication of plasmids through activation of initiation proteins. This is Chaperone protein DnaJ from Rickettsia massiliae (strain Mtu5).